The chain runs to 207 residues: Guanylate kinase (207 aa).

The Guanylate kinase-like domain occupies 4–184; sequence GTLYIVSAPS…ALSDLKTIIR (181 aa). 11–18 serves as a coordination point for ATP; sequence APSGAGKS.

Belongs to the guanylate kinase family.

It localises to the cytoplasm. It carries out the reaction GMP + ATP = GDP + ADP. Essential for recycling GMP and indirectly, cGMP. The protein is Guanylate kinase of Yersinia pestis bv. Antiqua (strain Antiqua).